Consider the following 203-residue polypeptide: Outer-membrane lipoprotein LolB (203 aa).

The N-terminal stretch at 1–22 (MPVNLNHTLLLCLLVAASLLSG) is a signal peptide. Cysteine 23 is lipidated: N-palmitoyl cysteine. Cysteine 23 is lipidated: S-diacylglycerol cysteine.

This sequence belongs to the LolB family. As to quaternary structure, monomer.

It localises to the cell outer membrane. In terms of biological role, plays a critical role in the incorporation of lipoproteins in the outer membrane after they are released by the LolA protein. The protein is Outer-membrane lipoprotein LolB of Shewanella denitrificans (strain OS217 / ATCC BAA-1090 / DSM 15013).